The chain runs to 99 residues: Integration host factor subunit alpha (99 aa).

Residues 49 to 73 (FGNFDLRDKNQRPGRNPKTGEDIPI) form a disordered region.

Belongs to the bacterial histone-like protein family. As to quaternary structure, heterodimer of an alpha and a beta chain.

Functionally, this protein is one of the two subunits of integration host factor, a specific DNA-binding protein that functions in genetic recombination as well as in transcriptional and translational control. The chain is Integration host factor subunit alpha from Shigella boydii serotype 18 (strain CDC 3083-94 / BS512).